The chain runs to 358 residues: Protein SRG1 (358 aa).

The 101-residue stretch at 209-309 (SVQSMRMNYY…RLSIATFHNV (101 aa)) folds into the Fe2OG dioxygenase domain. 3 residues coordinate Fe cation: histidine 233, aspartate 235, and histidine 290.

This sequence belongs to the iron/ascorbate-dependent oxidoreductase family. In terms of tissue distribution, low expression in roots and leaves.

The sequence is that of Protein SRG1 (SRG1) from Arabidopsis thaliana (Mouse-ear cress).